The chain runs to 65 residues: Small ribosomal subunit protein bS21 (65 aa).

It belongs to the bacterial ribosomal protein bS21 family.

The protein is Small ribosomal subunit protein bS21 of Flavobacterium psychrophilum (strain ATCC 49511 / DSM 21280 / CIP 103535 / JIP02/86).